The primary structure comprises 382 residues: Pyrimidine monooxygenase RutA (382 aa).

FMN is bound by residues 68–69 (IK), Asn134, Glu143, 159–160 (RY), and Ser209.

This sequence belongs to the NtaA/SnaA/DszA monooxygenase family. RutA subfamily.

The catalysed reaction is uracil + FMNH2 + NADH + O2 = (Z)-3-ureidoacrylate + FMN + NAD(+) + H2O + H(+). It carries out the reaction thymine + FMNH2 + NADH + O2 = (Z)-2-methylureidoacrylate + FMN + NAD(+) + H2O + H(+). Functionally, catalyzes the pyrimidine ring opening between N-3 and C-4 by an unusual flavin hydroperoxide-catalyzed mechanism, adding oxygen atoms in the process to yield ureidoacrylate peracid, that immediately reacts with FMN forming ureidoacrylate and FMN-N(5)-oxide. The FMN-N(5)-oxide reacts spontaneously with NADH to produce FMN. Requires the flavin reductase RutF to regenerate FMN in vivo. This is Pyrimidine monooxygenase RutA from Escherichia coli O55:H7 (strain CB9615 / EPEC).